We begin with the raw amino-acid sequence, 477 residues long: ATP synthase subunit beta (477 aa).

Residue 148–155 (GGAGVGKT) coordinates ATP.

Belongs to the ATPase alpha/beta chains family. As to quaternary structure, F-type ATPases have 2 components, CF(1) - the catalytic core - and CF(0) - the membrane proton channel. CF(1) has five subunits: alpha(3), beta(3), gamma(1), delta(1), epsilon(1). CF(0) has three main subunits: a(1), b(2) and c(9-12). The alpha and beta chains form an alternating ring which encloses part of the gamma chain. CF(1) is attached to CF(0) by a central stalk formed by the gamma and epsilon chains, while a peripheral stalk is formed by the delta and b chains.

The protein localises to the cell inner membrane. It catalyses the reaction ATP + H2O + 4 H(+)(in) = ADP + phosphate + 5 H(+)(out). Produces ATP from ADP in the presence of a proton gradient across the membrane. The catalytic sites are hosted primarily by the beta subunits. The polypeptide is ATP synthase subunit beta (Psychrobacter cryohalolentis (strain ATCC BAA-1226 / DSM 17306 / VKM B-2378 / K5)).